We begin with the raw amino-acid sequence, 290 residues long: Tubulin beta-4B chain (290 aa).

An MREI motif motif is present at residues 1-4 (MREI). Residue Gln11 participates in GTP binding. At Thr55 the chain carries Phosphothreonine. Residue Lys58 is modified to N6-acetyllysine. Positions 69, 138, 142, 143, 144, and 172 each coordinate GTP. Glu69 serves as a coordination point for Mg(2+).

The protein belongs to the tubulin family. As to quaternary structure, dimer of alpha and beta chains. A typical microtubule is a hollow water-filled tube with an outer diameter of 25 nm and an inner diameter of 15 nM. Alpha-beta heterodimers associate head-to-tail to form protofilaments running lengthwise along the microtubule wall with the beta-tubulin subunit facing the microtubule plus end conferring a structural polarity. Microtubules usually have 13 protofilaments but different protofilament numbers can be found in some organisms and specialized cells. Component of sperm flagellar doublet microtubules. Mg(2+) serves as cofactor. Post-translationally, some glutamate residues at the C-terminus are polyglycylated, resulting in polyglycine chains on the gamma-carboxyl group. Glycylation is mainly limited to tubulin incorporated into axonemes (cilia and flagella) whereas glutamylation is prevalent in neuronal cells, centrioles, axonemes, and the mitotic spindle. Both modifications can coexist on the same protein on adjacent residues, and lowering polyglycylation levels increases polyglutamylation, and reciprocally. Cilia and flagella glycylation is required for their stability and maintenance. Flagella glycylation controls sperm motility. Some glutamate residues at the C-terminus are polyglutamylated, resulting in polyglutamate chains on the gamma-carboxyl group. Polyglutamylation plays a key role in microtubule severing by spastin (SPAST). SPAST preferentially recognizes and acts on microtubules decorated with short polyglutamate tails: severing activity by SPAST increases as the number of glutamates per tubulin rises from one to eight, but decreases beyond this glutamylation threshold. Glutamylation is also involved in cilia motility.

It localises to the cytoplasm. Its subcellular location is the cytoskeleton. The protein resides in the flagellum axoneme. Functionally, tubulin is the major constituent of microtubules, a cylinder consisting of laterally associated linear protofilaments composed of alpha- and beta-tubulin heterodimers. Microtubules grow by the addition of GTP-tubulin dimers to the microtubule end, where a stabilizing cap forms. Below the cap, tubulin dimers are in GDP-bound state, owing to GTPase activity of alpha-tubulin. The sequence is that of Tubulin beta-4B chain (TUBB4B) from Mesocricetus auratus (Golden hamster).